Here is a 357-residue protein sequence, read N- to C-terminus: Aurora kinase A- and ninein-interacting protein (357 aa).

The span at 72-93 shows a compositional bias: polar residues; the sequence is TSQQGKTNGADQRSVSSHTESQ. Residues 72 to 102 form a disordered region; the sequence is TSQQGKTNGADQRSVSSHTESQTNKESKEDA. Residues 189-357 are interaction with AURKA; sequence QKEGEDSSCE…EGNQVIRHQA (169 aa). Positions 281–357 are interaction with RBBP8/CtIP; the sequence is KDSWSQLFTE…EGNQVIRHQA (77 aa). S292 is subject to Phosphoserine.

The protein belongs to the AUNIP family. As to quaternary structure, interacts (via C-terminus) with AURKA (via C-terminus). Interacts (via N-terminus) with NIN; this interaction blocks NIN phosphorylation by both AURKA and GSK3B. Identified in a complex with NIN and AURKA. Interacts with RBBP8/CtIP.

It is found in the nucleus. The protein localises to the chromosome. Its subcellular location is the cytoplasm. The protein resides in the cytoskeleton. It localises to the microtubule organizing center. It is found in the centrosome. The protein localises to the spindle pole. DNA-binding protein that accumulates at DNA double-strand breaks (DSBs) following DNA damage and promotes DNA resection and homologous recombination. Serves as a sensor of DNA damage: binds DNA with a strong preference for DNA substrates that mimic structures generated at stalled replication forks, and anchors RBBP8/CtIP to DSB sites to promote DNA end resection and ensuing homologous recombination repair. Inhibits non-homologous end joining (NHEJ). Required for the dynamic movement of AURKA at the centrosomes and spindle apparatus during the cell cycle. This chain is Aurora kinase A- and ninein-interacting protein, found in Bos taurus (Bovine).